Consider the following 86-residue polypeptide: Protein Tat (86 aa).

Residues 1–21 (MDPVDPNLEPWNHPGSQPKTA) are disordered. Positions 1–24 (MDPVDPNLEPWNHPGSQPKTACNR) are interaction with human CREBBP. The interval 1 to 48 (MDPVDPNLEPWNHPGSQPKTACNRCHCKKCCYHCQVCFITKGLGISYG) is transactivation. Zn(2+)-binding residues include Cys-22, Cys-25, and Cys-27. Positions 22–37 (CNRCHCKKCCYHCQVC) are cysteine-rich. Lys-28 carries the N6-acetyllysine; by host PCAF modification. Zn(2+) is bound by residues Cys-30, His-33, Cys-34, and Cys-37. The core stretch occupies residues 38 to 48 (FITKGLGISYG). Positions 47 to 86 (YGRKKRRQRRRPSQGGQTHQDPIPKQPSSQPRGNPTGPKE) are disordered. Over residues 48-58 (GRKKRRQRRRP) the composition is skewed to basic residues. Residues 49–57 (RKKRRQRRR) carry the Nuclear localization signal, RNA-binding (TAR), and protein transduction motif. An interaction with the host capping enzyme RNGTT region spans residues 49-86 (RKKRRQRRRPSQGGQTHQDPIPKQPSSQPRGNPTGPKE). An N6-acetyllysine; by host EP300 and GCN5L2 mark is found at Lys-50 and Lys-51. Asymmetric dimethylarginine; by host PRMT6 is present on residues Arg-52 and Arg-53. Polar residues predominate over residues 60-79 (QGGQTHQDPIPKQPSSQPRG). Lys-71 is covalently cross-linked (Glycyl lysine isopeptide (Lys-Gly) (interchain with G-Cter in ubiquitin)).

It belongs to the lentiviruses Tat family. As to quaternary structure, interacts with host CCNT1. Associates with the P-TEFb complex composed at least of Tat, P-TEFb (CDK9 and CCNT1), TAR RNA, RNA Pol II. Recruits the HATs CREBBP, TAF1/TFIID, EP300, PCAF and GCN5L2. Interacts with host KAT5/Tip60; this interaction targets the latter to degradation. Interacts with the host deacetylase SIRT1. Interacts with host capping enzyme RNGTT; this interaction stimulates RNGTT. Binds to host KDR, and to the host integrins ITGAV/ITGB3 and ITGA5/ITGB1. Interacts with host KPNB1/importin beta-1 without previous binding to KPNA1/importin alpha-1. Interacts with EIF2AK2. Interacts with host nucleosome assembly protein NAP1L1; this interaction may be required for the transport of Tat within the nucleus, since the two proteins interact at the nuclear rim. Interacts with host C1QBP/SF2P32; this interaction involves lysine-acetylated Tat. Interacts with the host chemokine receptors CCR2, CCR3 and CXCR4. Interacts with host DPP4/CD26; this interaction may trigger an anti-proliferative effect. Interacts with host LDLR. Interacts with the host extracellular matrix metalloproteinase MMP1. Interacts with host PRMT6; this interaction mediates Tat's methylation. Interacts with, and is ubiquitinated by MDM2/Hdm2. Interacts with host PSMC3 and HTATIP2. Interacts with STAB1; this interaction may overcome SATB1-mediated repression of IL2 and IL2RA (interleukin) in T cells by binding to the same domain than HDAC1. Interacts (when acetylated) with human CDK13, thereby increasing HIV-1 mRNA splicing and promoting the production of the doubly spliced HIV-1 protein Nef. Interacts with host TBP; this interaction modulates the activity of transcriptional pre-initiation complex. Interacts with host RELA. Interacts with host PLSCR1; this interaction negatively regulates Tat transactivation activity by altering its subcellular distribution. Asymmetrical arginine methylation by host PRMT6 seems to diminish the transactivation capacity of Tat and affects the interaction with host CCNT1. In terms of processing, acetylation by EP300, CREBBP, GCN5L2/GCN5 and PCAF regulates the transactivation activity of Tat. EP300-mediated acetylation of Lys-50 promotes dissociation of Tat from the TAR RNA through the competitive binding to PCAF's bromodomain. In addition, the non-acetylated Tat's N-terminus can also interact with PCAF. PCAF-mediated acetylation of Lys-28 enhances Tat's binding to CCNT1. Lys-50 is deacetylated by SIRT1. Post-translationally, polyubiquitination by host MDM2 does not target Tat to degradation, but activates its transactivation function and fosters interaction with CCNT1 and TAR RNA. Phosphorylated by EIF2AK2 on serine and threonine residues adjacent to the basic region important for TAR RNA binding and function. Phosphorylation of Tat by EIF2AK2 is dependent on the prior activation of EIF2AK2 by dsRNA.

Its subcellular location is the host nucleus. It localises to the host nucleolus. It is found in the host cytoplasm. The protein resides in the secreted. Its function is as follows. Transcriptional activator that increases RNA Pol II processivity, thereby increasing the level of full-length viral transcripts. Recognizes a hairpin structure at the 5'-LTR of the nascent viral mRNAs referred to as the transactivation responsive RNA element (TAR) and recruits the cyclin T1-CDK9 complex (P-TEFb complex) that will in turn hyperphosphorylate the RNA polymerase II to allow efficient elongation. The CDK9 component of P-TEFb and other Tat-activated kinases hyperphosphorylate the C-terminus of RNA Pol II that becomes stabilized and much more processive. Other factors such as HTATSF1/Tat-SF1, SUPT5H/SPT5, and HTATIP2 are also important for Tat's function. Besides its effect on RNA Pol II processivity, Tat induces chromatin remodeling of proviral genes by recruiting the histone acetyltransferases (HATs) CREBBP, EP300 and PCAF to the chromatin. This also contributes to the increase in proviral transcription rate, especially when the provirus integrates in transcriptionally silent region of the host genome. To ensure maximal activation of the LTR, Tat mediates nuclear translocation of NF-kappa-B by interacting with host RELA. Through its interaction with host TBP, Tat may also modulate transcription initiation. Tat can reactivate a latently infected cell by penetrating in it and transactivating its LTR promoter. In the cytoplasm, Tat is thought to act as a translational activator of HIV-1 mRNAs. Extracellular circulating Tat can be endocytosed by surrounding uninfected cells via the binding to several surface receptors such as CD26, CXCR4, heparan sulfate proteoglycans (HSPG) or LDLR. Neurons are rarely infected, but they internalize Tat via their LDLR. Through its interaction with nuclear HATs, Tat is potentially able to control the acetylation-dependent cellular gene expression. Modulates the expression of many cellular genes involved in cell survival, proliferation or in coding for cytokines or cytokine receptors. Tat plays a role in T-cell and neurons apoptosis. Tat induced neurotoxicity and apoptosis probably contribute to neuroAIDS. Circulating Tat also acts as a chemokine-like and/or growth factor-like molecule that binds to specific receptors on the surface of the cells, affecting many cellular pathways. In the vascular system, Tat binds to ITGAV/ITGB3 and ITGA5/ITGB1 integrins dimers at the surface of endothelial cells and competes with bFGF for heparin-binding sites, leading to an excess of soluble bFGF. The chain is Protein Tat from Homo sapiens (Human).